Reading from the N-terminus, the 127-residue chain is Lysozyme C (127 aa).

In terms of domain architecture, C-type lysozyme spans 1 to 127 (KDIPRCELVK…KDLSSYVRGC (127 aa)). 4 disulfide bridges follow: Cys-6-Cys-127, Cys-30-Cys-115, Cys-64-Cys-80, and Cys-76-Cys-94. Residues Glu-35 and Asp-52 contribute to the active site. Ca(2+) contacts are provided by Lys-82, Asp-85, Asn-87, Asp-90, and Asp-91.

Belongs to the glycosyl hydrolase 22 family. As to quaternary structure, monomer. Requires Ca(2+) as cofactor.

It is found in the secreted. It carries out the reaction Hydrolysis of (1-&gt;4)-beta-linkages between N-acetylmuramic acid and N-acetyl-D-glucosamine residues in a peptidoglycan and between N-acetyl-D-glucosamine residues in chitodextrins.. Its function is as follows. Lysozymes have primarily a bacteriolytic function; those in tissues and body fluids are associated with the monocyte-macrophage system and enhance the activity of immunoagents. This is Lysozyme C (LYZ) from Columba livia (Rock dove).